Reading from the N-terminus, the 171-residue chain is PBAN-type neuropeptides (171 aa).

Residues 1-22 (MFRLYFFFNVICIFLAIRSAIG) form the signal peptide. A propeptide spanning residues 23–47 (GEVPDATEQKINNFLASGKDSEDLS) is cleaved from the precursor. Leu59 is modified (leucine amide). Positions 63–111 (TIASELHDEMMDEIDDNPLYYSGESPQRVASEIAQGTPYVVLLLTGRVL) are excised as a propeptide. The segment at 120-151 (HSTTPRLGRRDASSSNENNSRPPFAPRLGRNL) is disordered. 3 positions are modified to leucine amide: Leu126, Leu147, and Leu157. Positions 160–171 (SFGAPVVDNFAY) are excised as a propeptide.

It belongs to the pyrokinin family.

Its subcellular location is the secreted. In terms of biological role, a hormone that controls sex pheromone production in females and pheromone responsiveness in male. Also mediates visceral muscle contractile activity (myotropic activity). The polypeptide is PBAN-type neuropeptides (Aedes aegypti (Yellowfever mosquito)).